The sequence spans 253 residues: Ubiquinone/menaquinone biosynthesis C-methyltransferase UbiE (253 aa).

Residues threonine 76, aspartate 97, and 125–126 each bind S-adenosyl-L-methionine; that span reads NA.

Belongs to the class I-like SAM-binding methyltransferase superfamily. MenG/UbiE family.

The enzyme catalyses a 2-demethylmenaquinol + S-adenosyl-L-methionine = a menaquinol + S-adenosyl-L-homocysteine + H(+). It catalyses the reaction a 2-methoxy-6-(all-trans-polyprenyl)benzene-1,4-diol + S-adenosyl-L-methionine = a 5-methoxy-2-methyl-3-(all-trans-polyprenyl)benzene-1,4-diol + S-adenosyl-L-homocysteine + H(+). It participates in quinol/quinone metabolism; menaquinone biosynthesis; menaquinol from 1,4-dihydroxy-2-naphthoate: step 2/2. The protein operates within cofactor biosynthesis; ubiquinone biosynthesis. Its function is as follows. Methyltransferase required for the conversion of demethylmenaquinol (DMKH2) to menaquinol (MKH2) and the conversion of 2-polyprenyl-6-methoxy-1,4-benzoquinol (DDMQH2) to 2-polyprenyl-3-methyl-6-methoxy-1,4-benzoquinol (DMQH2). The protein is Ubiquinone/menaquinone biosynthesis C-methyltransferase UbiE of Rhodopseudomonas palustris (strain HaA2).